The following is a 245-amino-acid chain: tRNA1(Val) (adenine(37)-N6)-methyltransferase (245 aa).

This sequence belongs to the methyltransferase superfamily. tRNA (adenine-N(6)-)-methyltransferase family.

It localises to the cytoplasm. It carries out the reaction adenosine(37) in tRNA1(Val) + S-adenosyl-L-methionine = N(6)-methyladenosine(37) in tRNA1(Val) + S-adenosyl-L-homocysteine + H(+). Its function is as follows. Specifically methylates the adenine in position 37 of tRNA(1)(Val) (anticodon cmo5UAC). The chain is tRNA1(Val) (adenine(37)-N6)-methyltransferase from Escherichia coli (strain UTI89 / UPEC).